The following is a 332-amino-acid chain: Capsular polysaccharide phosphotransferase WcwK (332 aa).

It belongs to the stealth family.

The protein is Capsular polysaccharide phosphotransferase WcwK (wcwK) of Streptococcus pneumoniae.